The chain runs to 466 residues: UDP-N-acetylmuramoylalanine--D-glutamate ligase (466 aa).

122–128 (GTNGKTT) contacts ATP.

The protein belongs to the MurCDEF family.

The protein localises to the cytoplasm. It catalyses the reaction UDP-N-acetyl-alpha-D-muramoyl-L-alanine + D-glutamate + ATP = UDP-N-acetyl-alpha-D-muramoyl-L-alanyl-D-glutamate + ADP + phosphate + H(+). The protein operates within cell wall biogenesis; peptidoglycan biosynthesis. Cell wall formation. Catalyzes the addition of glutamate to the nucleotide precursor UDP-N-acetylmuramoyl-L-alanine (UMA). The chain is UDP-N-acetylmuramoylalanine--D-glutamate ligase from Aromatoleum aromaticum (strain DSM 19018 / LMG 30748 / EbN1) (Azoarcus sp. (strain EbN1)).